We begin with the raw amino-acid sequence, 768 residues long: Probable dipeptidyl peptidase 4 (768 aa).

The N-terminal stretch at 1-17 is a signal peptide; the sequence is MKLGKWSVLLLVGCTAA. Residues Asn38, Asn81, Asn104, Asn113, Asn221, Asn282, and Asn468 are each glycosylated (N-linked (GlcNAc...) asparagine). Ser616 (charge relay system) is an active-site residue. Asn668 carries N-linked (GlcNAc...) asparagine glycosylation. Active-site charge relay system residues include Asp693 and His728.

This sequence belongs to the peptidase S9B family.

It localises to the secreted. The catalysed reaction is Release of an N-terminal dipeptide, Xaa-Yaa-|-Zaa-, from a polypeptide, preferentially when Yaa is Pro, provided Zaa is neither Pro nor hydroxyproline.. Its function is as follows. Extracellular dipeptidyl-peptidase which removes N-terminal dipeptides sequentially from polypeptides having unsubstituted N-termini provided that the penultimate residue is proline. This chain is Probable dipeptidyl peptidase 4 (dpp4), found in Aspergillus clavatus (strain ATCC 1007 / CBS 513.65 / DSM 816 / NCTC 3887 / NRRL 1 / QM 1276 / 107).